Consider the following 51-residue polypeptide: Small polypeptide DEVIL 1 (51 aa).

Residues 1–25 (MEMKRVMMSSAERSKEKKRSISRRL) are disordered. A compositionally biased stretch (basic residues) spans 16–25 (EKKRSISRRL). A required for DVL/RTFL small polypeptide activity region spans residues 20–51 (SISRRLGKYMKEQKGRIYIIRRCMVMLLCSHD). Residues 28–44 (YMKEQKGRIYIIRRCMV) form a helical membrane-spanning segment.

This sequence belongs to the DVL/RTFL small polypeptides family. Mostly expressed in leaves and, to a lower extent, in roots and stems.

The protein localises to the cell membrane. Its function is as follows. Small polypeptide acting as a regulatory molecule which coordinates cellular responses required for differentiation, growth and development, including leaves shape, pedicule elongation, inflorescence organization and fruit maturation, probably by restricting polar cell proliferation in lateral organs and coordinating socket cell recruitment and differentiation at trichome sites. This Arabidopsis thaliana (Mouse-ear cress) protein is Small polypeptide DEVIL 1.